A 300-amino-acid polypeptide reads, in one-letter code: uncharacterized protein (300 aa).

This is an uncharacterized protein from Bradyrhizobium diazoefficiens (strain JCM 10833 / BCRC 13528 / IAM 13628 / NBRC 14792 / USDA 110).